A 423-amino-acid chain; its full sequence is Adenylosuccinate synthetase (423 aa).

GTP is bound by residues 12-18 and 40-42; these read GDEGKGK and GHT. Asp-13 (proton acceptor) is an active-site residue. The Mg(2+) site is built by Asp-13 and Gly-40. Residues 13–16, 38–41, Thr-129, Arg-143, Gln-221, Thr-236, and Arg-300 contribute to the IMP site; these read DEGK and NAGH. The active-site Proton donor is the His-41. 296–302 provides a ligand contact to substrate; the sequence is AVTGRKR. Residues Arg-302, 328-330, and 408-410 each bind GTP; these read KSD and SVG.

This sequence belongs to the adenylosuccinate synthetase family. Homodimer. Mg(2+) serves as cofactor.

It is found in the cytoplasm. It carries out the reaction IMP + L-aspartate + GTP = N(6)-(1,2-dicarboxyethyl)-AMP + GDP + phosphate + 2 H(+). It functions in the pathway purine metabolism; AMP biosynthesis via de novo pathway; AMP from IMP: step 1/2. Functionally, plays an important role in the de novo pathway of purine nucleotide biosynthesis. Catalyzes the first committed step in the biosynthesis of AMP from IMP. In Parabacteroides distasonis (strain ATCC 8503 / DSM 20701 / CIP 104284 / JCM 5825 / NCTC 11152), this protein is Adenylosuccinate synthetase.